The primary structure comprises 355 residues: Phospho-N-acetylmuramoyl-pentapeptide-transferase (355 aa).

10 helical membrane-spanning segments follow: residues 3-23 (GVLIAAMVALVVSLLGTPWVI), 56-76 (VIIVATLVGYFLAHLVTGIGF), 80-100 (GLLVLLVMTGLGIVGFLDDYI), 120-140 (AAVALAFGLLAVRFKNHAGLL), 152-172 (TSLTVGIIGFPLLAWIIIAAT), 185-205 (LAAGTSAMVFGAYVVISFWQF), 224-244 (PLDVALVAAAAMGACFGFLWW), 251-271 (IFMGDTGSLALGGAFASIAIV), 276-296 (LLLVVLGGLFVIETLSVMIQV), and 330-350 (FWIVSGLAVAFGLGLFYAEFL).

This sequence belongs to the glycosyltransferase 4 family. MraY subfamily. Mg(2+) serves as cofactor.

It is found in the cell membrane. The enzyme catalyses UDP-N-acetyl-alpha-D-muramoyl-L-alanyl-gamma-D-glutamyl-meso-2,6-diaminopimeloyl-D-alanyl-D-alanine + di-trans,octa-cis-undecaprenyl phosphate = di-trans,octa-cis-undecaprenyl diphospho-N-acetyl-alpha-D-muramoyl-L-alanyl-D-glutamyl-meso-2,6-diaminopimeloyl-D-alanyl-D-alanine + UMP. It participates in cell wall biogenesis; peptidoglycan biosynthesis. Its function is as follows. Catalyzes the initial step of the lipid cycle reactions in the biosynthesis of the cell wall peptidoglycan: transfers peptidoglycan precursor phospho-MurNAc-pentapeptide from UDP-MurNAc-pentapeptide onto the lipid carrier undecaprenyl phosphate, yielding undecaprenyl-pyrophosphoryl-MurNAc-pentapeptide, known as lipid I. The sequence is that of Phospho-N-acetylmuramoyl-pentapeptide-transferase from Frankia alni (strain DSM 45986 / CECT 9034 / ACN14a).